The sequence spans 229 residues: Enolase-phosphatase E1 (229 aa).

The protein belongs to the HAD-like hydrolase superfamily. MasA/MtnC family. In terms of assembly, monomer. The cofactor is Mg(2+).

It carries out the reaction 5-methylsulfanyl-2,3-dioxopentyl phosphate + H2O = 1,2-dihydroxy-5-(methylsulfanyl)pent-1-en-3-one + phosphate. The protein operates within amino-acid biosynthesis; L-methionine biosynthesis via salvage pathway; L-methionine from S-methyl-5-thio-alpha-D-ribose 1-phosphate: step 3/6. Its pathway is amino-acid biosynthesis; L-methionine biosynthesis via salvage pathway; L-methionine from S-methyl-5-thio-alpha-D-ribose 1-phosphate: step 4/6. Bifunctional enzyme that catalyzes the enolization of 2,3-diketo-5-methylthiopentyl-1-phosphate (DK-MTP-1-P) into the intermediate 2-hydroxy-3-keto-5-methylthiopentenyl-1-phosphate (HK-MTPenyl-1-P), which is then dephosphorylated to form the acireductone 1,2-dihydroxy-3-keto-5-methylthiopentene (DHK-MTPene). This chain is Enolase-phosphatase E1, found in Yersinia pseudotuberculosis serotype IB (strain PB1/+).